The following is a 690-amino-acid chain: Probable xyloglucan glycosyltransferase 1 (690 aa).

The next 2 helical transmembrane spans lie at 120-140 (AFLLLSVLLLAVDVAAHAQGW) and 166-186 (LEYLAPGLQFLANACVVLFLI). The active site involves D272. Residues D331 and D333 each coordinate substrate. D425 is a catalytic residue. Helical transmembrane passes span 503–523 (LILPFYSFTLFCIILPMTMFV) and 528–548 (LPAWVVCYIPATMSLLNILPA). Residues 607–637 (QPKQQRVGSAPNLDSLAKESHPKKDSKKKKH) are disordered. 2 helical membrane-spanning segments follow: residues 640 to 659 (IYQKELALSFLLLTAAARSL) and 665 to 685 (IHFYFLLFQGVSFLVVGLDLI).

Belongs to the glycosyltransferase 2 family. Plant cellulose synthase-like C subfamily.

Its subcellular location is the golgi apparatus membrane. In terms of biological role, probable beta-1,4-glucan synthase rather involved in the synthesis of the xyloglucan backbone than cellulose. Seems to work simultaneously with xyloglucan 6-xylosyltransferase. Xyloglucan is a noncellulosic polysaccharides of plant cell wall and consists of a glucan backbone substituted by xylose, galactose and fucose. This Oryza sativa subsp. japonica (Rice) protein is Probable xyloglucan glycosyltransferase 1 (CSLC1).